The sequence spans 344 residues: S-adenosylmethionine:tRNA ribosyltransferase-isomerase (344 aa).

It belongs to the QueA family. As to quaternary structure, monomer.

The protein localises to the cytoplasm. It catalyses the reaction 7-aminomethyl-7-carbaguanosine(34) in tRNA + S-adenosyl-L-methionine = epoxyqueuosine(34) in tRNA + adenine + L-methionine + 2 H(+). It participates in tRNA modification; tRNA-queuosine biosynthesis. Transfers and isomerizes the ribose moiety from AdoMet to the 7-aminomethyl group of 7-deazaguanine (preQ1-tRNA) to give epoxyqueuosine (oQ-tRNA). In Lactiplantibacillus plantarum (strain ATCC BAA-793 / NCIMB 8826 / WCFS1) (Lactobacillus plantarum), this protein is S-adenosylmethionine:tRNA ribosyltransferase-isomerase.